Here is a 344-residue protein sequence, read N- to C-terminus: Heat-inducible transcription repressor HrcA (344 aa).

The protein belongs to the HrcA family.

Its function is as follows. Negative regulator of class I heat shock genes (grpE-dnaK-dnaJ and groELS operons). Prevents heat-shock induction of these operons. The chain is Heat-inducible transcription repressor HrcA from Streptococcus pneumoniae serotype 19F (strain G54).